Here is a 327-residue protein sequence, read N- to C-terminus: 2-methoxy-6-polyprenyl-1,4-benzoquinol methylase, mitochondrial (327 aa).

A mitochondrion-targeting transit peptide spans 1–49 (MAAPRSCALWSYCGRGWSWAMRGCQLLGLRSSWPGAPLSARLLPQEKRA). S-adenosyl-L-methionine is bound by residues threonine 117, aspartate 171, and 199–200 (DA).

It belongs to the class I-like SAM-binding methyltransferase superfamily. MenG/UbiE family. In terms of assembly, component of a multi-subunit COQ enzyme complex, composed of at least COQ3, COQ4, COQ5, COQ6, COQ7 and COQ9. Interacts with PYURF; the interaction is direct, stabilizes COQ5 protein and associates PYURF with COQ enzyme complex.

Its subcellular location is the mitochondrion inner membrane. It catalyses the reaction 2-methoxy-6-(all-trans-decaprenyl)benzene-1,4-diol + S-adenosyl-L-methionine = 5-methoxy-2-methyl-3-(all-trans-decaprenyl)benzene-1,4-diol + S-adenosyl-L-homocysteine + H(+). The protein operates within cofactor biosynthesis; ubiquinone biosynthesis. In terms of biological role, methyltransferase required for the conversion of 2-decaprenyl-6-methoxy-1,4-benzoquinol (DDMQH2) to 2-decaprenyl-3-methyl-6-methoxy-1,4-benzoquinol (DMQH2). This chain is 2-methoxy-6-polyprenyl-1,4-benzoquinol methylase, mitochondrial, found in Pongo abelii (Sumatran orangutan).